We begin with the raw amino-acid sequence, 118 residues long: V-type proton ATPase subunit G 3 (118 aa).

The tract at residues 1–34 (MTSQSQGIHQLLQAEKRAKDKLEEAKKRKGKRLK) is disordered. Residues 5–54 (SQGIHQLLQAEKRAKDKLEEAKKRKGKRLKQAKEEAMVEIDQYRMQRDKE) are a coiled coil. Over residues 14-26 (AEKRAKDKLEEAK) the composition is skewed to basic and acidic residues.

It belongs to the V-ATPase G subunit family. As to quaternary structure, V-ATPase is a heteromultimeric enzyme made up of two complexes: the ATP-hydrolytic V1 complex and the proton translocation V0 complex. The V1 complex consists of three catalytic AB heterodimers that form a heterohexamer, three peripheral stalks each consisting of EG heterodimers, one central rotor including subunits D and F, and the regulatory subunits C and H. The proton translocation complex V0 consists of the proton transport subunit a, a ring of proteolipid subunits c9c'', rotary subunit d, subunits e and f, and the accessory subunits ATP6AP1/Ac45 and ATP6AP2/PRR. Kidney.

Functionally, subunit of the V1 complex of vacuolar(H+)-ATPase (V-ATPase), a multisubunit enzyme composed of a peripheral complex (V1) that hydrolyzes ATP and a membrane integral complex (V0) that translocates protons. V-ATPase is responsible for acidifying and maintaining the pH of intracellular compartments and in some cell types, is targeted to the plasma membrane, where it is responsible for acidifying the extracellular environment. The protein is V-type proton ATPase subunit G 3 (ATP6V1G3) of Homo sapiens (Human).